A 383-amino-acid polypeptide reads, in one-letter code: Retrovirus-related Pol polyprotein from type-1 retrotransposable element R1 3 (383 aa).

The Reverse transcriptase domain occupies 1–88 (VDAFADDLLL…DRVRYLGVNV (88 aa)). A nucleic acid-binding endonuclease region spans residues 229–383 (LSLHECRELV…VQRMRENEES (155 aa)).

It carries out the reaction DNA(n) + a 2'-deoxyribonucleoside 5'-triphosphate = DNA(n+1) + diphosphate. This Nasonia vitripennis (Parasitic wasp) protein is Retrovirus-related Pol polyprotein from type-1 retrotransposable element R1 3.